The chain runs to 438 residues: Enolase (438 aa).

The substrate site is built by His159 and Glu168. Glu211 (proton donor) is an active-site residue. Mg(2+) is bound by residues Asp246, Glu297, and Asp322. Substrate contacts are provided by Glu297 and Asp322. Lys347 serves as the catalytic Proton acceptor. Residues 374-377 and Lys398 each bind substrate; that span reads SHRS.

Belongs to the enolase family. In terms of assembly, homodimer. The cofactor is Mg(2+).

The protein resides in the cytoplasm. The enzyme catalyses (2R)-2-phosphoglycerate = phosphoenolpyruvate + H2O. The protein operates within carbohydrate degradation; glycolysis; pyruvate from D-glyceraldehyde 3-phosphate: step 4/5. This Aspergillus fumigatus (strain ATCC MYA-4609 / CBS 101355 / FGSC A1100 / Af293) (Neosartorya fumigata) protein is Enolase (enoA).